The following is a 748-amino-acid chain: Phosphoenolpyruvate-dependent phosphotransferase system (748 aa).

Residues 1 to 127 (MLTRLREIVE…RRQLLGVLVV (127 aa)) form the GAF domain. Residues 128–170 (QQRELRQYDESEESFLVTLATQMAAILSQSQVTALFGQYRQTR) are linker. The PTS EI stretch occupies residues 171 to 748 (IRALPAAPGV…GMGGLIRGGL (578 aa)). The Tele-phosphohistidine intermediate role is filled by histidine 356. Residues arginine 462 and arginine 498 each contribute to the phosphoenolpyruvate site. Residues glutamate 597 and aspartate 621 each coordinate Mg(2+). Phosphoenolpyruvate-binding positions include 620 to 621 (ND) and arginine 631. Cysteine 668 acts as the Proton donor in catalysis.

This sequence belongs to the PEP-utilizing enzyme family. It depends on Mg(2+) as a cofactor.

It localises to the cytoplasm. It carries out the reaction L-histidyl-[protein] + phosphoenolpyruvate = N(pros)-phospho-L-histidyl-[protein] + pyruvate. Functionally, component of the phosphoenolpyruvate-dependent nitrogen-metabolic phosphotransferase system (nitrogen-metabolic PTS), that seems to be involved in regulating nitrogen metabolism. Enzyme I-Ntr transfers the phosphoryl group from phosphoenolpyruvate (PEP) to the phosphoryl carrier protein (NPr). Could function in the transcriptional regulation of sigma-54 dependent operons in conjunction with the NPr (PtsO) and EIIA-Ntr (PtsN) proteins. Enzyme I-Ntr is specific for NPr. This Salmonella typhimurium (strain LT2 / SGSC1412 / ATCC 700720) protein is Phosphoenolpyruvate-dependent phosphotransferase system (ptsP).